Here is a 257-residue protein sequence, read N- to C-terminus: NAD-capped RNA hydrolase NudC (257 aa).

Residues lysine 25 and arginine 69 each coordinate substrate. Zn(2+)-binding residues include cysteine 98 and cysteine 101. Glutamate 111 lines the substrate pocket. Zn(2+) is bound by residues cysteine 116 and cysteine 119. A substrate-binding site is contributed by tyrosine 124. In terms of domain architecture, Nudix hydrolase spans 125–248 (PQIAPCIIVA…TVARRLIEDT (124 aa)). Alanine 158, glutamate 174, and glutamate 178 together coordinate a divalent metal cation. The short motif at 159–180 (GFVEVGETLEQAVAREVMEESG) is the Nudix box element. 192-199 (QPWPFPQS) contributes to the substrate binding site. Glutamate 219 is a binding site for a divalent metal cation. Alanine 241 contributes to the substrate binding site.

Belongs to the Nudix hydrolase family. NudC subfamily. In terms of assembly, homodimer. The cofactor is Mg(2+). Mn(2+) serves as cofactor. Zn(2+) is required as a cofactor.

The enzyme catalyses a 5'-end NAD(+)-phospho-ribonucleoside in mRNA + H2O = a 5'-end phospho-adenosine-phospho-ribonucleoside in mRNA + beta-nicotinamide D-ribonucleotide + 2 H(+). The catalysed reaction is NAD(+) + H2O = beta-nicotinamide D-ribonucleotide + AMP + 2 H(+). It carries out the reaction NADH + H2O = reduced beta-nicotinamide D-ribonucleotide + AMP + 2 H(+). Its function is as follows. mRNA decapping enzyme that specifically removes the nicotinamide adenine dinucleotide (NAD) cap from a subset of mRNAs by hydrolyzing the diphosphate linkage to produce nicotinamide mononucleotide (NMN) and 5' monophosphate mRNA. The NAD-cap is present at the 5'-end of some mRNAs and stabilizes RNA against 5'-processing. Has preference for mRNAs with a 5'-end purine. Catalyzes the hydrolysis of a broad range of dinucleotide pyrophosphates. In Escherichia coli O127:H6 (strain E2348/69 / EPEC), this protein is NAD-capped RNA hydrolase NudC.